The sequence spans 607 residues: Aspartate--tRNA(Asp/Asn) ligase (607 aa).

Glu173 provides a ligand contact to L-aspartate. The aspartate stretch occupies residues 197–200 (QLFK). Arg219 contacts L-aspartate. Residues 219–221 (RDE) and Gln228 contribute to the ATP site. His456 lines the L-aspartate pocket. Residue Glu498 participates in ATP binding. Arg505 provides a ligand contact to L-aspartate. 550-553 (GLDR) serves as a coordination point for ATP.

The protein belongs to the class-II aminoacyl-tRNA synthetase family. Type 1 subfamily. Homodimer.

Its subcellular location is the cytoplasm. It carries out the reaction tRNA(Asx) + L-aspartate + ATP = L-aspartyl-tRNA(Asx) + AMP + diphosphate. Aspartyl-tRNA synthetase with relaxed tRNA specificity since it is able to aspartylate not only its cognate tRNA(Asp) but also tRNA(Asn). Reaction proceeds in two steps: L-aspartate is first activated by ATP to form Asp-AMP and then transferred to the acceptor end of tRNA(Asp/Asn). This chain is Aspartate--tRNA(Asp/Asn) ligase, found in Magnetococcus marinus (strain ATCC BAA-1437 / JCM 17883 / MC-1).